Reading from the N-terminus, the 298-residue chain is MTQLIITYQSDSKLEESEVFLSELNRIKKEEDKFAKFSSLSDLRAIVKKGEFRIVSIYLSSGSILAEIFTFEFLKEFYGVLDFGSVLKVNILALDSIDKVKAFERNLLFSGFIKVKKLKGDGLNSSDSDFEIVIKAEKPSWKPEEGKVLVDDIDLEGSVPDIKNYVPLGQGKESCKSKERACNNCNCGRADLEKEIGIEAARKVYQEKVETGTARSSCGNCYLGDAFRCSGCPYKGMPAFKPGEKVSLANAEGDANDRTVDMNLIHEEKVDLITTTFDDDGSGVSNVQSKGGVLKLNI.

The interval 1 to 143 is N-terminal SAM-like domain; the sequence is MTQLIITYQS…IKAEKPSWKP (143 aa). A linker region spans residues 143 to 162; it reads PEEGKVLVDDIDLEGSVPDI. Residues Cys175, Cys182, Cys185, and Cys187 each coordinate [2Fe-2S] cluster. A fe-S binding site A region spans residues 175 to 187; the sequence is CKSKERACNNCNC. 4 residues coordinate [4Fe-4S] cluster: Cys218, Cys221, Cys229, and Cys232. Short sequence motifs (cx2C motif) lie at residues 218-221 and 229-232; these read CGNC and CSGC. Residues 218–232 are fe-S binding site B; the sequence is CGNCYLGDAFRCSGC.

It belongs to the anamorsin family. As to quaternary structure, monomer. It depends on [2Fe-2S] cluster as a cofactor. [4Fe-4S] cluster is required as a cofactor.

The protein resides in the cytoplasm. It is found in the mitochondrion intermembrane space. Its function is as follows. Component of the cytosolic iron-sulfur (Fe-S) protein assembly (CIA) machinery. Required for the maturation of extramitochondrial Fe-S proteins. Part of an electron transfer chain functioning in an early step of cytosolic Fe-S biogenesis, facilitating the de novo assembly of a [4Fe-4S] cluster on the cytosolic Fe-S scaffold complex. Electrons are transferred from NADPH via a FAD- and FMN-containing diflavin oxidoreductase. Together with the diflavin oxidoreductase, also required for the assembly of the diferric tyrosyl radical cofactor of ribonucleotide reductase (RNR), probably by providing electrons for reduction during radical cofactor maturation in the catalytic small subunit. This chain is Anamorsin homolog, found in Cryptosporidium hominis.